The primary structure comprises 183 residues: Adenine phosphoribosyltransferase (183 aa).

This sequence belongs to the purine/pyrimidine phosphoribosyltransferase family. In terms of assembly, homodimer.

It localises to the cytoplasm. The enzyme catalyses AMP + diphosphate = 5-phospho-alpha-D-ribose 1-diphosphate + adenine. Its pathway is purine metabolism; AMP biosynthesis via salvage pathway; AMP from adenine: step 1/1. Functionally, catalyzes a salvage reaction resulting in the formation of AMP, that is energically less costly than de novo synthesis. The polypeptide is Adenine phosphoribosyltransferase (Klebsiella pneumoniae subsp. pneumoniae (strain ATCC 700721 / MGH 78578)).